A 143-amino-acid polypeptide reads, in one-letter code: Photosystem I reaction center subunit IV A, chloroplastic (143 aa).

Residues 1 to 44 (MAMTTASTVFVLPANVTSVAGASSSRSSVSFLPMRNAGSRLVVR) constitute a chloroplast transit peptide. The interval 43 to 85 (VRAAEDPAPASSSSKDSPAAAAAPDGATATKPKPPPIGPKRGS) is disordered. Residues 48–73 (DPAPASSSSKDSPAAAAAPDGATATK) show a composition bias toward low complexity.

Belongs to the PsaE family. Post-translationally, 2 isoforms may exist. With or without the N-terminal alanine.

The protein localises to the plastid. It localises to the chloroplast thylakoid membrane. Stabilizes the interaction between PsaC and the PSI core, assists the docking of the ferredoxin to PSI and interacts with ferredoxin-NADP oxidoreductase. The polypeptide is Photosystem I reaction center subunit IV A, chloroplastic (PSAE1) (Arabidopsis thaliana (Mouse-ear cress)).